A 139-amino-acid polypeptide reads, in one-letter code: Putative nickel-responsive regulator (139 aa).

4 residues coordinate Ni(2+): histidine 79, histidine 90, histidine 92, and cysteine 98.

Belongs to the transcriptional regulatory CopG/NikR family. Requires Ni(2+) as cofactor.

In terms of biological role, transcriptional regulator. This Solidesulfovibrio magneticus (strain ATCC 700980 / DSM 13731 / RS-1) (Desulfovibrio magneticus) protein is Putative nickel-responsive regulator.